A 344-amino-acid polypeptide reads, in one-letter code: Arginine N-succinyltransferase (344 aa).

Succinyl-CoA is bound at residue L125. H229 acts as the Proton donor in catalysis.

This sequence belongs to the arginine N-succinyltransferase family.

It catalyses the reaction succinyl-CoA + L-arginine = N(2)-succinyl-L-arginine + CoA + H(+). The protein operates within amino-acid degradation; L-arginine degradation via AST pathway; L-glutamate and succinate from L-arginine: step 1/5. In terms of biological role, catalyzes the transfer of succinyl-CoA to arginine to produce N(2)-succinylarginine. This Shigella boydii serotype 4 (strain Sb227) protein is Arginine N-succinyltransferase.